The primary structure comprises 504 residues: Anaerobic nitric oxide reductase transcription regulator NorR (504 aa).

A 4-aspartylphosphate modification is found at Asp57. One can recognise a Sigma-54 factor interaction domain in the interval Met187–Val416. ATP is bound by residues Gly215–Glu222 and Ala278–Glu287. A DNA-binding region (H-T-H motif) is located at residues Trp479 to Lys498.

The protein operates within nitrogen metabolism; nitric oxide reduction. Its function is as follows. Required for the expression of anaerobic nitric oxide (NO) reductase, acts as a transcriptional activator for at least the norVW operon. Activation also requires sigma-54. This chain is Anaerobic nitric oxide reductase transcription regulator NorR, found in Escherichia fergusonii (strain ATCC 35469 / DSM 13698 / CCUG 18766 / IAM 14443 / JCM 21226 / LMG 7866 / NBRC 102419 / NCTC 12128 / CDC 0568-73).